The chain runs to 154 residues: Myoglobin (154 aa).

The region spanning glycine 2–lysine 148 is the Globin domain. Phosphoserine is present on serine 4. Residue histidine 65 participates in nitrite binding. Histidine 65 contributes to the O2 binding site. A Phosphothreonine modification is found at threonine 68. Histidine 94 serves as a coordination point for heme b.

It belongs to the globin family. As to quaternary structure, monomeric.

It localises to the cytoplasm. It is found in the sarcoplasm. It carries out the reaction Fe(III)-heme b-[protein] + nitric oxide + H2O = Fe(II)-heme b-[protein] + nitrite + 2 H(+). The enzyme catalyses H2O2 + AH2 = A + 2 H2O. Functionally, monomeric heme protein which primary function is to store oxygen and facilitate its diffusion within muscle tissues. Reversibly binds oxygen through a pentacoordinated heme iron and enables its timely and efficient release as needed during periods of heightened demand. Depending on the oxidative conditions of tissues and cells, and in addition to its ability to bind oxygen, it also has a nitrite reductase activity whereby it regulates the production of bioactive nitric oxide. Under stress conditions, like hypoxia and anoxia, it also protects cells against reactive oxygen species thanks to its pseudoperoxidase activity. The polypeptide is Myoglobin (MB) (Ziphius cavirostris (Cuvier's beaked whale)).